The primary structure comprises 465 residues: Indoleacetamide hydrolase (465 aa).

Residues Met1–Arg40 form a disordered region. Residues Arg9 to Cys39 show a composition bias toward basic and acidic residues. Residue Ser149 is the Charge relay system of the active site. The active-site Acyl-ester intermediate is Ser173.

This sequence belongs to the amidase family.

It participates in plant hormone metabolism; auxin biosynthesis. Functionally, hydrolyzes indole-3-acetamide (IAM) into indole-3-acetic acid (IAA). The protein is Indoleacetamide hydrolase (bam) of Bradyrhizobium japonicum.